Here is a 556-residue protein sequence, read N- to C-terminus: Formate--tetrahydrofolate ligase (556 aa).

65–72 (TAAGEGKS) contacts ATP.

Belongs to the formate--tetrahydrofolate ligase family.

The enzyme catalyses (6S)-5,6,7,8-tetrahydrofolate + formate + ATP = (6R)-10-formyltetrahydrofolate + ADP + phosphate. The protein operates within one-carbon metabolism; tetrahydrofolate interconversion. This is Formate--tetrahydrofolate ligase from Elusimicrobium minutum (strain Pei191).